A 352-amino-acid polypeptide reads, in one-letter code: 3-dehydroquinate synthase (352 aa).

Residues 60 to 65 (DGEGAK), 118 to 119 (TT), K131, K140, and 158 to 161 (FLET) contribute to the NAD(+) site. E173, H237, and H253 together coordinate Zn(2+).

Belongs to the sugar phosphate cyclases superfamily. Dehydroquinate synthase family. It depends on NAD(+) as a cofactor. The cofactor is Co(2+). Zn(2+) is required as a cofactor.

The protein localises to the cytoplasm. The enzyme catalyses 7-phospho-2-dehydro-3-deoxy-D-arabino-heptonate = 3-dehydroquinate + phosphate. It functions in the pathway metabolic intermediate biosynthesis; chorismate biosynthesis; chorismate from D-erythrose 4-phosphate and phosphoenolpyruvate: step 2/7. Functionally, catalyzes the conversion of 3-deoxy-D-arabino-heptulosonate 7-phosphate (DAHP) to dehydroquinate (DHQ). The sequence is that of 3-dehydroquinate synthase from Sulfurisphaera tokodaii (strain DSM 16993 / JCM 10545 / NBRC 100140 / 7) (Sulfolobus tokodaii).